A 503-amino-acid polypeptide reads, in one-letter code: Lanosterol 14-alpha demethylase (503 aa).

The chain crosses the membrane as a helical span at residues 24–44 (GNLLSTLLIACAFTLSLVYLF). Cys449 contacts heme.

The protein belongs to the cytochrome P450 family. The cofactor is heme. Ubiquitinated by MARCHF6, leading to proteasomal degradation.

The protein resides in the endoplasmic reticulum membrane. Its subcellular location is the microsome membrane. It carries out the reaction a 14alpha-methyl steroid + 3 reduced [NADPH--hemoprotein reductase] + 3 O2 = a Delta(14) steroid + formate + 3 oxidized [NADPH--hemoprotein reductase] + 4 H2O + 4 H(+). The enzyme catalyses lanosterol + 3 reduced [NADPH--hemoprotein reductase] + 3 O2 = 4,4-dimethyl-5alpha-cholesta-8,14,24-trien-3beta-ol + formate + 3 oxidized [NADPH--hemoprotein reductase] + 4 H2O + 4 H(+). It catalyses the reaction 24,25-dihydrolanosterol + 3 reduced [NADPH--hemoprotein reductase] + 3 O2 = 4,4-dimethyl-8,14-cholestadien-3beta-ol + formate + 3 oxidized [NADPH--hemoprotein reductase] + 4 H2O + 4 H(+). The catalysed reaction is a 14alpha-methyl steroid + reduced [NADPH--hemoprotein reductase] + O2 = a 14alpha-hydroxymethyl steroid + oxidized [NADPH--hemoprotein reductase] + H2O + H(+). It carries out the reaction a 14alpha-hydroxymethyl steroid + reduced [NADPH--hemoprotein reductase] + O2 = a 14alpha-formyl steroid + oxidized [NADPH--hemoprotein reductase] + 2 H2O + H(+). The enzyme catalyses a 14alpha-formyl steroid + reduced [NADPH--hemoprotein reductase] + O2 = a Delta(14) steroid + formate + oxidized [NADPH--hemoprotein reductase] + H2O + 2 H(+). It catalyses the reaction lanosterol + reduced [NADPH--hemoprotein reductase] + O2 = 32-hydroxylanosterol + oxidized [NADPH--hemoprotein reductase] + H2O + H(+). The catalysed reaction is 32-hydroxylanosterol + reduced [NADPH--hemoprotein reductase] + O2 = 32-oxolanosterol + oxidized [NADPH--hemoprotein reductase] + 2 H2O + H(+). It carries out the reaction 32-oxolanosterol + reduced [NADPH--hemoprotein reductase] + O2 = 4,4-dimethyl-5alpha-cholesta-8,14,24-trien-3beta-ol + formate + oxidized [NADPH--hemoprotein reductase] + H2O + 2 H(+). The enzyme catalyses 24,25-dihydrolanosterol + reduced [NADPH--hemoprotein reductase] + O2 = 32-hydroxy-24,25-dihydrolanosterol + oxidized [NADPH--hemoprotein reductase] + H2O + H(+). It catalyses the reaction 32-hydroxy-24,25-dihydrolanosterol + reduced [NADPH--hemoprotein reductase] + O2 = 32-oxo-24,25-dihydrolanosterol + oxidized [NADPH--hemoprotein reductase] + 2 H2O + H(+). The catalysed reaction is 32-oxo-24,25-dihydrolanosterol + reduced [NADPH--hemoprotein reductase] + O2 = 4,4-dimethyl-8,14-cholestadien-3beta-ol + formate + oxidized [NADPH--hemoprotein reductase] + H2O + 2 H(+). It functions in the pathway steroid biosynthesis; zymosterol biosynthesis; zymosterol from lanosterol: step 1/6. Inhibited by azalanstat. Inhibited by azole antifungal agents ketoconazole, itraconazole and fluconazole. Sterol 14alpha-demethylase that plays a critical role in the cholesterol biosynthesis pathway, being cholesterol the major sterol component in mammalian membranes as well as a precursor for bile acid and steroid hormone synthesis. Cytochrome P450 monooxygenase that catalyzes the three-step oxidative removal of the 14alpha-methyl group (C-32) of sterols such as lanosterol (lanosta-8,24-dien-3beta-ol) and 24,25-dihydrolanosterol (DHL) in the form of formate, and converts the sterols to 4,4-dimethyl-5alpha-cholesta-8,14,24-trien-3beta-ol and 4,4-dimethyl-8,14-cholestadien-3beta-ol, respectively, which are intermediates of cholesterol biosynthesis. Can also demethylate substrates not intrinsic to mammals, such as eburicol (24-methylene-24,25-dihydrolanosterol), but at a lower rate than DHL. The chain is Lanosterol 14-alpha demethylase from Mus musculus (Mouse).